Consider the following 409-residue polypeptide: FSGDFCDSSLCLNGGTCLLDQDPQKPFHCLCPEGFTGLICNETEKGPCFPNPCHNDAECEVIDDAHRGDVFTEYICKCPHGYTGIHCEIICNAPLGMETGAIADFQISASSMHLGFMGLQRWAPELARLHRAGIVNAWTASNYDRNPWIQVNLLRRMRVTGVVTQGASRAGSAEYMKTFKVAYSTDGRKFQFIQGAEESGDKIFMGNLDNSGLKVNLFEVPLEVQYVRLVPIICHRGCTLRFELLGCELSGCAEPLGLKDNTIPNKQITASSFYRTWGLSAFSWYPFYARLDNQGKFNAWTAQSNSASEWLQIDLGSQRRVTGIITQGARDFGHIQYVAAYKVAYSDDGVSWTEYRDQGALEGKIFPGNLDNNSHKKNMFETPFLTRFVRILPVAWHNRITLRVELLGC.

EGF-like domains follow at residues 2-41 and 44-88; these read SGDFCDSSLCLNGGTCLLDQDPQKPFHCLCPEGFTGLICN and EKGP…IHCE. 3 disulfides stabilise this stretch: Cys6–Cys17, Cys11–Cys29, and Cys31–Cys40. The N-linked (GlcNAc...) asparagine glycan is linked to Asn41. Cystine bridges form between Cys48-Cys59, Cys53-Cys76, Cys78-Cys87, Cys91-Cys247, Cys234-Cys238, and Cys252-Cys409. A Cell attachment site motif is present at residues 67 to 69; that stretch reads RGD. 2 consecutive F5/8 type C domains span residues 91–247 and 252–409; these read CNAP…LLGC and CAEP…LLGC. Asn372 carries an N-linked (GlcNAc...) asparagine glycan.

In terms of tissue distribution, mammary epithelial cell surfaces and spermatozoan. Also present in testis, epididymis, uterus, adrenal gland, tonsil, muscle, heart, lymphatic gland, thymus and kidney but not spleen, liver, lung or brain.

It localises to the membrane. The protein localises to the secreted. Its subcellular location is the cytoplasmic vesicle. The protein resides in the secretory vesicle. It is found in the acrosome membrane. In terms of biological role, contributes to phagocytic removal of apoptotic cells in many tissues. Plays an important role in the maintenance of intestinal epithelial homeostasis and the promotion of mucosal healing. Promotes VEGF-dependent neovascularization. Specific ligand for the alpha-v/beta-3 and alpha-v/beta-5 receptors. Also binds to phosphatidylserine-enriched cell surfaces in a receptor-independent manner. Zona pellucida-binding protein which may play a role in gamete interaction. This Sus scrofa (Pig) protein is Lactadherin (MFGE8).